Consider the following 425-residue polypeptide: Dual-specificity RNA methyltransferase RlmN (425 aa).

Glutamate 136 functions as the Proton acceptor in the catalytic mechanism. The Radical SAM core domain maps to 142-381 (GDDRGTLCVS…FTAGYASPVR (240 aa)). Cysteine 149 and cysteine 392 are disulfide-bonded. [4Fe-4S] cluster is bound by residues cysteine 156, cysteine 160, and cysteine 163. S-adenosyl-L-methionine contacts are provided by residues 218–219 (GE), serine 250, 272–274 (SLH), and asparagine 349. Cysteine 392 acts as the S-methylcysteine intermediate in catalysis.

This sequence belongs to the radical SAM superfamily. RlmN family. It depends on [4Fe-4S] cluster as a cofactor.

It is found in the cytoplasm. It carries out the reaction adenosine(2503) in 23S rRNA + 2 reduced [2Fe-2S]-[ferredoxin] + 2 S-adenosyl-L-methionine = 2-methyladenosine(2503) in 23S rRNA + 5'-deoxyadenosine + L-methionine + 2 oxidized [2Fe-2S]-[ferredoxin] + S-adenosyl-L-homocysteine. The catalysed reaction is adenosine(37) in tRNA + 2 reduced [2Fe-2S]-[ferredoxin] + 2 S-adenosyl-L-methionine = 2-methyladenosine(37) in tRNA + 5'-deoxyadenosine + L-methionine + 2 oxidized [2Fe-2S]-[ferredoxin] + S-adenosyl-L-homocysteine. In terms of biological role, specifically methylates position 2 of adenine 2503 in 23S rRNA and position 2 of adenine 37 in tRNAs. m2A2503 modification seems to play a crucial role in the proofreading step occurring at the peptidyl transferase center and thus would serve to optimize ribosomal fidelity. The chain is Dual-specificity RNA methyltransferase RlmN from Methylorubrum extorquens (strain PA1) (Methylobacterium extorquens).